We begin with the raw amino-acid sequence, 176 residues long: Ribosome maturation factor RimM (176 aa).

Residues 93-170 (DGEYYHADLI…ELPTEIEGDT (78 aa)) form the PRC barrel domain.

It belongs to the RimM family. As to quaternary structure, binds ribosomal protein uS19.

The protein localises to the cytoplasm. In terms of biological role, an accessory protein needed during the final step in the assembly of 30S ribosomal subunit, possibly for assembly of the head region. Essential for efficient processing of 16S rRNA. May be needed both before and after RbfA during the maturation of 16S rRNA. It has affinity for free ribosomal 30S subunits but not for 70S ribosomes. This is Ribosome maturation factor RimM from Rhodopseudomonas palustris (strain BisB5).